The sequence spans 331 residues: Very-long-chain 3-oxoacyl-CoA reductase (331 aa).

A helical transmembrane segment spans residues 15-35 (VQWALAGVGALYISAKVLSYL). The NADP(+) site is built by V60, D115, D123, N142, Y209, K213, I242, and S244. Y209 acts as the Proton donor in catalysis. Catalysis depends on K213, which acts as the Lowers pKa of active site Tyr.

The protein belongs to the short-chain dehydrogenases/reductases (SDR) family.

The protein resides in the endoplasmic reticulum membrane. It carries out the reaction a very-long-chain (3R)-3-hydroxyacyl-CoA + NADP(+) = a very-long-chain 3-oxoacyl-CoA + NADPH + H(+). The protein operates within lipid metabolism; fatty acid biosynthesis. In terms of biological role, component of the microsomal membrane bound fatty acid elongation system, which produces the 26-carbon very long-chain fatty acids (VLCFA) from palmitate. Catalyzes the reduction of the 3-ketoacyl-CoA intermediate that is formed in each cycle of fatty acid elongation. VLCFAs serve as precursors for ceramide and sphingolipids. In Pyricularia oryzae (strain 70-15 / ATCC MYA-4617 / FGSC 8958) (Rice blast fungus), this protein is Very-long-chain 3-oxoacyl-CoA reductase.